Here is a 332-residue protein sequence, read N- to C-terminus: L-lactate dehydrogenase A chain (332 aa).

A2 is modified (N-acetylalanine). Position 5 is an N6-acetyllysine; alternate (K5). K5 carries the N6-succinyllysine; alternate modification. K14 is modified (N6-acetyllysine). Residue 29–57 coordinates NAD(+); sequence GAVGMACAISILMKELADEIALVDVMEDK. K57 carries the N6-acetyllysine; alternate modification. K57 participates in a covalent cross-link: Glycyl lysine isopeptide (Lys-Gly) (interchain with G-Cter in SUMO2); alternate. Position 81 is an N6-acetyllysine (K81). Residue R99 coordinates NAD(+). R106 is a substrate binding site. The residue at position 118 (K118) is an N6-acetyllysine; alternate. Residue K118 is modified to N6-succinyllysine; alternate. At K126 the chain carries N6-acetyllysine. N138 serves as a coordination point for NAD(+). Substrate is bound by residues N138 and R169. H193 (proton acceptor) is an active-site residue. An N6-acetyllysine mark is found at K224 and K232. Y239 carries the post-translational modification Phosphotyrosine. Residue K243 is modified to N6-acetyllysine. Substrate is bound at residue T248. T309 is modified (phosphothreonine). K318 carries the post-translational modification N6-acetyllysine; alternate. At K318 the chain carries N6-succinyllysine; alternate. Position 322 is a phosphothreonine (T322).

Belongs to the LDH/MDH superfamily. LDH family. In terms of assembly, homotetramer. Interacts with PTEN upstream reading frame protein MP31. In terms of processing, ISGylated.

It is found in the cytoplasm. It catalyses the reaction (S)-lactate + NAD(+) = pyruvate + NADH + H(+). The protein operates within fermentation; pyruvate fermentation to lactate; (S)-lactate from pyruvate: step 1/1. In terms of biological role, interconverts simultaneously and stereospecifically pyruvate and lactate with concomitant interconversion of NADH and NAD(+). The protein is L-lactate dehydrogenase A chain (LDHA) of Sus scrofa (Pig).